The following is a 222-amino-acid chain: Charged multivesicular body protein 4b (222 aa).

2 disordered regions span residues 1–21 and 177–222; these read MSLI…PSPQ and NLLE…WATA. Residues 21 to 182 adopt a coiled-coil conformation; the sequence is QEAIQKLRDT…ELDKNLLEVQ (162 aa).

It belongs to the SNF7 family. As to quaternary structure, probable core component of the endosomal sorting required for transport complex III (ESCRT-III). ESCRT-III components are thought to multimerize to form a flat lattice on the perimeter membrane of the endosome.

Its subcellular location is the cytoplasm. It is found in the cytosol. The protein localises to the late endosome membrane. The protein resides in the midbody. Probable core component of the endosomal sorting required for transport complex III (ESCRT-III) which is involved in multivesicular bodies (MVBs) formation and sorting of endosomal cargo proteins into MVBs. MVBs contain intraluminal vesicles (ILVs) that are generated by invagination and scission from the limiting membrane of the endosome and mostly are delivered to lysosomes enabling degradation of membrane proteins, such as stimulated growth factor receptors, lysosomal enzymes and lipids. The chain is Charged multivesicular body protein 4b (chmp4b) from Xenopus laevis (African clawed frog).